A 511-amino-acid chain; its full sequence is Glucans biosynthesis protein G (511 aa).

The first 22 residues, 1–22, serve as a signal peptide directing secretion; it reads MMKMRWLSAAVMLTLYTSSSWA.

Belongs to the OpgD/OpgG family.

It localises to the periplasm. Its pathway is glycan metabolism; osmoregulated periplasmic glucan (OPG) biosynthesis. Its function is as follows. Involved in the biosynthesis of osmoregulated periplasmic glucans (OPGs). This chain is Glucans biosynthesis protein G, found in Escherichia coli (strain K12 / MC4100 / BW2952).